A 157-amino-acid chain; its full sequence is Peptide methionine sulfoxide reductase MsrA (157 aa).

The active site involves C10.

The protein belongs to the MsrA Met sulfoxide reductase family.

The enzyme catalyses L-methionyl-[protein] + [thioredoxin]-disulfide + H2O = L-methionyl-(S)-S-oxide-[protein] + [thioredoxin]-dithiol. The catalysed reaction is [thioredoxin]-disulfide + L-methionine + H2O = L-methionine (S)-S-oxide + [thioredoxin]-dithiol. Has an important function as a repair enzyme for proteins that have been inactivated by oxidation. Catalyzes the reversible oxidation-reduction of methionine sulfoxide in proteins to methionine. This Clostridium botulinum (strain Kyoto / Type A2) protein is Peptide methionine sulfoxide reductase MsrA.